The following is a 191-amino-acid chain: NAD(P)H-quinone oxidoreductase subunit 6, chloroplastic (191 aa).

Transmembrane regions (helical) follow at residues 10-30 (TIFLFLESGLILGSLGVILLT), 32-52 (IVYSALFLGFVFVCISLLYLL), 61-81 (AQILIYVGAVNVLIIFAVMLI), 89-109 (FFVYWTIGDGITLTLCTSIFL), and 153-173 (FLLPFELMSIILLVALIGAIT).

It belongs to the complex I subunit 6 family. As to quaternary structure, NDH is composed of at least 16 different subunits, 5 of which are encoded in the nucleus.

Its subcellular location is the plastid. It localises to the chloroplast thylakoid membrane. It carries out the reaction a plastoquinone + NADH + (n+1) H(+)(in) = a plastoquinol + NAD(+) + n H(+)(out). It catalyses the reaction a plastoquinone + NADPH + (n+1) H(+)(in) = a plastoquinol + NADP(+) + n H(+)(out). Its function is as follows. NDH shuttles electrons from NAD(P)H:plastoquinone, via FMN and iron-sulfur (Fe-S) centers, to quinones in the photosynthetic chain and possibly in a chloroplast respiratory chain. The immediate electron acceptor for the enzyme in this species is believed to be plastoquinone. Couples the redox reaction to proton translocation, and thus conserves the redox energy in a proton gradient. The protein is NAD(P)H-quinone oxidoreductase subunit 6, chloroplastic (ndhG) of Marchantia polymorpha (Common liverwort).